The chain runs to 1736 residues: Collagen alpha-2(XI) chain (1736 aa).

An N-terminal signal peptide occupies residues methionine 1–alanine 27. One can recognise a Laminin G-like domain in the interval aspartate 57 to cysteine 228. Positions glutamine 215–arginine 486 are nonhelical region. Disordered stretches follow at residues glutamate 229–proline 465 and leucine 485–glycine 1539. A compositionally biased stretch (polar residues) spans proline 258–serine 270. Positions alanine 363–arginine 376 are enriched in low complexity. Collagen-like domains are found at residues glycine 399–glycine 447, glycine 487–alanine 545, and arginine 546–glutamate 587. The segment covering proline 400 to proline 413 has biased composition (pro residues). Residues glycine 487 to valine 1500 are triple-helical region. A compositionally biased stretch (low complexity) spans aspartate 515–lysine 533. The span at lysine 615 to proline 624 shows a compositional bias: pro residues. Low complexity predominate over residues glutamine 650–glutamine 663. Over residues arginine 765 to lysine 774 the composition is skewed to basic and acidic residues. The segment covering proline 842–lysine 861 has biased composition (low complexity). Over residues glycine 994–glycine 1003 the composition is skewed to gly residues. Residues isoleucine 1029–proline 1040 show a composition bias toward pro residues. Collagen-like domains lie at glycine 1072–glutamate 1127 and proline 1128–aspartate 1172. Low complexity predominate over residues proline 1115–proline 1133. A compositionally biased stretch (pro residues) spans methionine 1176–proline 1187. Positions glutamate 1217–lysine 1230 are enriched in low complexity. 2 stretches are compositionally biased toward basic and acidic residues: residues proline 1232–glutamate 1241 and aspartate 1287–aspartate 1296. Low complexity-rich tracts occupy residues proline 1341 to proline 1364 and glutamine 1376 to alanine 1386. The segment covering proline 1388 to leucine 1397 has biased composition (pro residues). The segment covering proline 1413–proline 1422 has biased composition (low complexity). The region spanning glycine 1444 to glutamate 1499 is the Collagen-like 6 domain. Pro residues predominate over residues proline 1457–alanine 1467. Residues proline 1469–proline 1481 show a composition bias toward low complexity. A propeptide spans isoleucine 1501–glycine 1736 (C-terminal propeptide). The Fibrillar collagen NC1 domain maps to glutamate 1541–methionine 1735. An intrachain disulfide couples cysteine 1571 to cysteine 1603. Ca(2+) is bound by residues aspartate 1589, asparagine 1591, glutamine 1592, cysteine 1594, and aspartate 1597. Residues asparagine 1604 and asparagine 1650 are each glycosylated (N-linked (GlcNAc...) asparagine). Intrachain disulfides connect cysteine 1612-cysteine 1733 and cysteine 1655-cysteine 1689.

The protein belongs to the fibrillar collagen family. Trimers composed of three different chains: alpha 1(XI), alpha 2(XI), and alpha 3(XI). Alpha 3(XI) is a post-translational modification of alpha 1(II). Alpha 1(V) can also be found instead of alpha 3(XI)=1(II). In terms of processing, prolines at the third position of the tripeptide repeating unit (G-X-Y) are hydroxylated in some or all of the chains.

The protein localises to the secreted. It is found in the extracellular space. It localises to the extracellular matrix. Its function is as follows. May play an important role in fibrillogenesis by controlling lateral growth of collagen II fibrils. The polypeptide is Collagen alpha-2(XI) chain (COL11A2) (Bos taurus (Bovine)).